We begin with the raw amino-acid sequence, 503 residues long: Na(+)-translocating NADH-quinone reductase subunit B (503 aa).

A run of 3 helical transmembrane segments spans residues 55–75, 120–142, and 160–180; these read MMLVVIALMPTIFAAVWNSGL, IFLPLLFISYAVGGTCEVLFAII, and LILPPTIPYWMAALGIAFGVV. The residue at position 248 (T248) is an FMN phosphoryl threonine. A run of 5 helical transmembrane segments spans residues 361–381, 384–404, 417–437, 452–472, and 475–495; these read TSTVACLLGAGLLLLTGIASW, MLSFGLSAFFFAWFFKIMSIL, FFIPAYRHLCIGGLAFGLVFM, WLYGAFIGFLTILIRLINPAY, and GVMLAILLGNVFAPLFDNIAL.

This sequence belongs to the NqrB/RnfD family. In terms of assembly, composed of six subunits; NqrA, NqrB, NqrC, NqrD, NqrE and NqrF. Requires FMN as cofactor.

The protein localises to the cell inner membrane. It carries out the reaction a ubiquinone + n Na(+)(in) + NADH + H(+) = a ubiquinol + n Na(+)(out) + NAD(+). In terms of biological role, NQR complex catalyzes the reduction of ubiquinone-1 to ubiquinol by two successive reactions, coupled with the transport of Na(+) ions from the cytoplasm to the periplasm. NqrA to NqrE are probably involved in the second step, the conversion of ubisemiquinone to ubiquinol. This chain is Na(+)-translocating NADH-quinone reductase subunit B, found in Chlamydia trachomatis serovar A (strain ATCC VR-571B / DSM 19440 / HAR-13).